The following is a 442-amino-acid chain: QWRF motif-containing protein 6 (442 aa).

Disordered stretches follow at residues 1–144 and 221–240; these read MEAK…LSQQ and FSRL…ADTK. The span at 57–66 shows a compositional bias: basic residues; that stretch reads KQHHLQHHQI. A compositionally biased stretch (basic and acidic residues) spans 80–89; it reads KMADGDENRS. A QWRF motif motif is present at residues 264–267; it reads QWRF.

Belongs to the QWRF family.

In Arabidopsis thaliana (Mouse-ear cress), this protein is QWRF motif-containing protein 6 (QWRF6).